Here is a 392-residue protein sequence, read N- to C-terminus: Cell division protein FtsZ (392 aa).

Residues 24–28, 111–113, E142, R145, and D189 contribute to the GTP site; these read GGGCN and GTG.

The protein belongs to the FtsZ family. Homodimer. Polymerizes to form a dynamic ring structure in a strictly GTP-dependent manner. Interacts directly with several other division proteins.

Its subcellular location is the cytoplasm. Essential cell division protein that forms a contractile ring structure (Z ring) at the future cell division site. The regulation of the ring assembly controls the timing and the location of cell division. One of the functions of the FtsZ ring is to recruit other cell division proteins to the septum to produce a new cell wall between the dividing cells. Binds GTP and shows GTPase activity. The polypeptide is Cell division protein FtsZ (Neisseria meningitidis serogroup A / serotype 4A (strain DSM 15465 / Z2491)).